Consider the following 968-residue polypeptide: Chaperone protein ClpB3, chloroplastic (968 aa).

The transit peptide at 1 to 67 (MATATTTATA…RLDHRPFVVR (67 aa)) directs the protein to the chloroplast. Residues 78-222 (TQQEFTEMAW…KSAIESIRGK (145 aa)) form the Clp R domain. Repeat stretches follow at residues 82–147 (FTEM…IQRQ) and 159–222 (LGRD…IRGK). The segment at 237–485 (LEKYGKDLTA…KLKMEITSKP (249 aa)) is i. Residue 282–289 (GEPGVGKT) coordinates ATP. Residues 488–606 (LDELDRSVIK…NEYLSSGKSM (119 aa)) adopt a coiled-coil conformation. The tract at residues 611 to 802 (VLGSDIAEIV…VIIMTSNVGS (192 aa)) is II. 685–692 (GPTGVGKT) contacts ATP.

The protein belongs to the ClpA/ClpB family.

It is found in the plastid. The protein resides in the chloroplast. Its function is as follows. Molecular chaperone essential for chloroplast development and seedling viability. Mediates internal thylakoid membrane formation and confers thermotolerance to chloroplasts during heat stress. This is Chaperone protein ClpB3, chloroplastic (CLPB3) from Arabidopsis thaliana (Mouse-ear cress).